Here is a 200-residue protein sequence, read N- to C-terminus: Small ribosomal subunit protein uS4 (200 aa).

Positions 22–43 (TGKELERRPYAPGQHGPTQRKK) are disordered. An S4 RNA-binding domain is found at 92–170 (QRLDNIVYRL…VPEYVTFDAE (79 aa)).

This sequence belongs to the universal ribosomal protein uS4 family. As to quaternary structure, part of the 30S ribosomal subunit. Contacts protein S5. The interaction surface between S4 and S5 is involved in control of translational fidelity.

Functionally, one of the primary rRNA binding proteins, it binds directly to 16S rRNA where it nucleates assembly of the body of the 30S subunit. In terms of biological role, with S5 and S12 plays an important role in translational accuracy. This chain is Small ribosomal subunit protein uS4, found in Listeria innocua serovar 6a (strain ATCC BAA-680 / CLIP 11262).